The chain runs to 310 residues: Olfactory receptor 2A1/2A42 (310 aa).

The Extracellular segment spans residues 1 to 24; sequence MGENQTMVTEFLLLGFLLGPRIQM. The N-linked (GlcNAc...) asparagine glycan is linked to asparagine 4. Residues 25-48 traverse the membrane as a helical segment; sequence LLFGLFSLFYIFTLLGNGAILGLI. Topologically, residues 49 to 56 are cytoplasmic; it reads SLDSRLHT. The chain crosses the membrane as a helical span at residues 57–78; sequence PMYFFLSHLAVVDIAYTRNTVP. Residues 79 to 99 lie on the Extracellular side of the membrane; sequence QMLANLLHPAKPISFAGCMTQ. Residues cysteine 96 and cysteine 188 are joined by a disulfide bond. A helical transmembrane segment spans residues 100 to 119; that stretch reads TFLCLSFGHSECLLLVLMSY. The Cytoplasmic segment spans residues 120 to 138; it reads DRYVAICHPLRYSVIMTWR. The chain crosses the membrane as a helical span at residues 139–157; it reads VCITLAVTSWTCGSLLALA. The Extracellular segment spans residues 158-195; it reads HVVLILRLPFSGPHEINHFFCEILSVLRLACADTWLNQ. The helical transmembrane segment at 196–218 threads the bilayer; it reads VVIFAACVFFLVGPPSLVLVSYS. Residues 219–235 are Cytoplasmic-facing; that stretch reads HILAAILRIQSGEGRRK. Residues 236-258 traverse the membrane as a helical segment; the sequence is AFSTCSSHLCVVGLFFGSAIIMY. The Extracellular portion of the chain corresponds to 259 to 271; it reads MAPKSRHPEEQQK. The helical transmembrane segment at 272 to 291 threads the bilayer; it reads VFFLFYSFFNPTLNPLIYSL. Topologically, residues 292–310 are cytoplasmic; sequence RNGEVKGALRRALGKESHS.

Belongs to the G-protein coupled receptor 1 family.

It is found in the cell membrane. Functionally, odorant receptor. The polypeptide is Olfactory receptor 2A1/2A42 (OR2A1) (Homo sapiens (Human)).